Consider the following 287-residue polypeptide: rRNA adenine N-6-methyltransferase (287 aa).

Positions 1–13 are enriched in basic residues; the sequence is MKKKNHKYRGKKL. Positions 1-21 are disordered; the sequence is MKKKNHKYRGKKLNRGESPNF. Residues His-25, Met-27, Gly-52, Glu-73, Asp-98, and Asn-114 each contribute to the S-adenosyl-L-methionine site.

This sequence belongs to the class I-like SAM-binding methyltransferase superfamily. rRNA adenine N(6)-methyltransferase family. As to quaternary structure, homodimer.

Functionally, involved in erythromycin resistance. This chain is rRNA adenine N-6-methyltransferase (ermJ), found in Bacillus anthracis.